Reading from the N-terminus, the 254-residue chain is UstYa family oxidase phomYc' (254 aa).

A helical transmembrane segment spans residues 38–58 (LVLVLQSVLIISLLASLHILG). Asn-64 carries N-linked (GlcNAc...) asparagine glycosylation. The short motif at 138-142 (HQLHC) is the HXXHC 1 element. Asn-159 carries an N-linked (GlcNAc...) asparagine glycan. The short motif at 173 to 177 (HIDHC) is the HXXHC 2 element.

Belongs to the ustYa family.

The protein localises to the membrane. Its pathway is mycotoxin biosynthesis. In terms of biological role, ustYa family oxidase; part of the gene cluster that mediates the biosynthesis of the phomopsins, a group of hexapeptide mycotoxins which infects lupins and causes lupinosis disease in livestock. Within the pathway, phomYc' catalyzes the desaturation of the Ile moiety into 2,3-dehydroisoleucine (dIle). The pathway starts with the processing of the precursor phomA' by several endopeptidases including kexin proteases as well as the cluster-specific S41 family peptidase phomP1 and the oligopeptidase phomG' to produce 10 identical copies of the hexapeptide Tyr-Val-Ile-Pro-Ile-Asp. After being excised from the precursor peptide, the core peptides are cyclized and modified post-translationally by enzymes encoded within the gene cluster. The timing and order of proteolysis of the phomA' precursor and PTMs are still unknown. Two tyrosinase-like enzymes, phomQ1' and phomQ2, catalyze the chlorination and hydroxylation of Tyr, respectively. PhomYb, is proposed to be involved in the construction of the macrocyclic structure. The other 4 ustYa family proteins may be involved in PTMs that generate the unique structure of phomopsin A. PhomYa' is required for the hydroxylation of C-beta of Tyr. PhomYc', phomYd', and phomYe are responsible for the biosynthesis of 2,3-dehydroisoleucine (dIle), 2,3-dehydroaspartic acid (dAsp), and 3,4-dehydroproline (dPro), respectively. While dIle formation by phomYc' is indispensable for the installation of dAsp by phomYd', the order of the other PTMs have not been elucidated yet. Most of the biosynthetic enzymes likely have broad substrate specificity, and thus, there might be a metabolic grid from a precursor to phomopsin A. The enzyme(s) responsible for the biosynthesis of 3,4-dehydrovaline (dVal) have also not been identified yet. Finally, phomM' acts as an S-adenosylmethionine-dependent alpha-N-methyltransferase that catalyzes two successive N-methylation reactions, converting N-desmethyl-phomopsin A to phomopsin A and phomopsin A further to an N,N-dimethylated congener called phomopsin E. The sequence is that of UstYa family oxidase phomYc' from Diaporthe leptostromiformis (Lupinosis disease fungus).